We begin with the raw amino-acid sequence, 388 residues long: tRNA (guanine-N(7)-)-methyltransferase (388 aa).

Positions 129, 154, and 181 each coordinate S-adenosyl-L-methionine. Substrate contacts are provided by lysine 207 and aspartate 237.

The protein belongs to the class I-like SAM-binding methyltransferase superfamily. TrmB family.

It catalyses the reaction guanosine(46) in tRNA + S-adenosyl-L-methionine = N(7)-methylguanosine(46) in tRNA + S-adenosyl-L-homocysteine. The protein operates within tRNA modification; N(7)-methylguanine-tRNA biosynthesis. Functionally, catalyzes the formation of N(7)-methylguanine at position 46 (m7G46) in tRNA. The chain is tRNA (guanine-N(7)-)-methyltransferase from Wolinella succinogenes (strain ATCC 29543 / DSM 1740 / CCUG 13145 / JCM 31913 / LMG 7466 / NCTC 11488 / FDC 602W) (Vibrio succinogenes).